Consider the following 401-residue polypeptide: Argininosuccinate synthase (401 aa).

Residue 9–17 (AYSGGLDTS) coordinates ATP. Y86 provides a ligand contact to L-citrulline. G116 lines the ATP pocket. L-aspartate-binding residues include T118, N122, and D123. N122 serves as a coordination point for L-citrulline. L-citrulline-binding residues include R126, S174, S183, E259, and Y271.

It belongs to the argininosuccinate synthase family. Type 1 subfamily. In terms of assembly, homotetramer.

It is found in the cytoplasm. It carries out the reaction L-citrulline + L-aspartate + ATP = 2-(N(omega)-L-arginino)succinate + AMP + diphosphate + H(+). The protein operates within amino-acid biosynthesis; L-arginine biosynthesis; L-arginine from L-ornithine and carbamoyl phosphate: step 2/3. The sequence is that of Argininosuccinate synthase from Bacillus cereus (strain B4264).